The following is a 125-amino-acid chain: Prefoldin subunit beta (125 aa).

It belongs to the prefoldin subunit beta family. In terms of assembly, heterohexamer of two alpha and four beta subunits.

The protein resides in the cytoplasm. Its function is as follows. Molecular chaperone capable of stabilizing a range of proteins. Seems to fulfill an ATP-independent, HSP70-like function in archaeal de novo protein folding. In Pyrobaculum calidifontis (strain DSM 21063 / JCM 11548 / VA1), this protein is Prefoldin subunit beta.